Here is a 903-residue protein sequence, read N- to C-terminus: Dynamin-like GTPase msp1, mitochondrial (903 aa).

Residues 1–78 (MGISWFLSRF…RFFSFSSISR (78 aa)) constitute a mitochondrion transit peptide. Residues 86-103 (LPVAGFSLVAGGAAYIGA) form a helical membrane-spanning segment. Basic and acidic residues predominate over residues 167-188 (VLQAERAKEHRSNSNDKQKSSD). The interval 167 to 198 (VLQAERAKEHRSNSNDKQKSSDNDEDPNDTTV) is disordered. A helical transmembrane segment spans residues 198-214 (VGIGAALAASILSVDSV). The Dynamin-type G domain occupies 260 to 531 (AVTLPSIVVI…LEYTMSKNLQ (272 aa)). The segment at 270 to 277 (GSQSSGKS) is G1 motif. Positions 273, 274, 275, 276, 277, 278, and 292 each coordinate GTP. Residue S277 coordinates Mg(2+). Residues 296–298 (VTR) are G2 motif. Positions 297 and 370 each coordinate Mg(2+). Positions 370-373 (DLPG) are G3 motif. Residues 438 to 441 (TKMD) are G4 motif. 3 residues coordinate GTP: K439, D441, and S468. Residues 467–470 (ISRI) form a G5 motif region. A paddle region region spans residues 691–805 (ATSEQVENCV…VLKSRACKHK (115 aa)). A disulfide bridge connects residues C802 and C811. The 94-residue stretch at 805–898 (KEAKYTCPEI…KINSLVILEQ (94 aa)) folds into the GED domain.

Belongs to the TRAFAC class dynamin-like GTPase superfamily. Dynamin/Fzo/YdjA family. Homooligomer. Interacts with cdr1. Post-translationally, cleavage of the transit peptide by mitochondrial processing protease (MPP) produces a long integral membrane form of msp1 (l-msp1). Further processing by a rhomboid protease after the transmembrane regions produces a short peripheral membrane form of msp1 (s-msp1). Both isoforms are required for full activity.

The protein resides in the mitochondrion inner membrane. It localises to the mitochondrion intermembrane space. It carries out the reaction GTP + H2O = GDP + phosphate + H(+). Functionally, dynamin-related GTPase that is essential for normal mitochondrial morphology by mediating fusion of the mitochondrial inner membranes and maintaining respiratory chain function. Exists in two forms: the transmembrane, long form (Dynamin-like GTPase msp1, long form; l-msp1), which is tethered to the inner mitochondrial membrane, and the short soluble form (Dynamin-like GTPase msp1, short form; s-msp1), which results from proteolytic cleavage and localizes in the intermembrane space. Both forms (l-msp1 and s-msp1) cooperate to catalyze the fusion of the mitochondrial inner membrane. Its role in mitochondrial morphology is required for mitochondrial genome maintenance. In terms of biological role, constitutes the transmembrane long form (l-msp1) that plays a central role in mitochondrial inner membrane fusion. L-msp1 and the soluble short form (s-msp1) form higher-order helical assemblies that coordinate the fusion of mitochondrial inner membranes. Inner membrane-anchored l-msp1 molecules initiate membrane remodeling by recruiting soluble s-msp1 to rapidly polymerize into a flexible cylindrical scaffold encaging the mitochondrial inner membrane. Once at the membrane surface, the formation of s-msp1 helices induce bilayer curvature. Msp1 dimerization through the paddle region, which inserts into cardiolipin-containing membrane, promotes GTP hydrolysis and the helical assembly of a flexible msp1 lattice on the membrane, which drives membrane curvature and mitochondrial fusion. Its function is as follows. Constitutes the soluble short form (s-msp1) generated by cleavage, which plays a central role in mitochondrial inner membrane fusion. The transmembrane long form (l-msp1) and the s-msp1 form higher-order helical assemblies that coordinate the fusion of mitochondrial inner membranes. Inner membrane-anchored l-msp1 molecules initiate membrane remodeling by recruiting soluble s-msp1 to rapidly polymerize into a flexible cylindrical scaffold encaging the mitochondrial inner membrane. Once at the membrane surface, the formation of s-msp1 helices induce bilayer curvature. Msp1 dimerization through the paddle region, which inserts into cardiolipin-containing membrane, promotes GTP hydrolysis and the helical assembly of a flexible msp1 lattice on the membrane, which drives membrane curvature and mitochondrial fusion. The sequence is that of Dynamin-like GTPase msp1, mitochondrial from Schizosaccharomyces pombe (strain 972 / ATCC 24843) (Fission yeast).